Here is a 415-residue protein sequence, read N- to C-terminus: MKKIKRSAADPDPVYPFGDEVPIPLPPFLVPGGGLTTDGLSLAVQTVDPLNVTLGGVGLKIGDGLSVVDGKLTSEAKIVADPPLQQSGDTLSLSTDSSMMVLPSGQLTINNLPSISVTSSGVGLVSPNAPLQLMSNGALQLSVGGGLTVGAQGSLQISTGVGVNVNAAGVLESYPLPPLVWDYSSKSLTLDIGPGLTVVNGKLQVIGATFSNQMSRMAPAPRADLQSNSIEPLPSPPSKTSLDIAEELQNDKGVSFAFQAREEELGAFTKRTLFAYSGDGLTGPFKAPASAELSSFLTAHPKGRWLIAFPLGTGIVSVDEGILTLEISRSLPEVGSGSSSTSLKVISIYFMDLFFPVPFIDRASHPAPRRSNNSRQLFHSKQRLFLKVKDFKKRSWYSSLFTLINLNIQECPELS.

It belongs to the adenoviridae fiber family. Homotrimer. Interacts (via N-terminal tail region) with pentons.

It localises to the virion. The protein resides in the host nucleus. Its function is as follows. Forms spikes that protrude from each vertex of the icosahedral capsid. Interacts with host receptor to provide virion initial attachment to target cell. Fiber proteins are shed during virus entry, when virus is still at the cell surface. This is Fiber protein from Pantherophis guttatus (Corn snake).